An 853-amino-acid polypeptide reads, in one-letter code: Trimethylguanosine synthase (853 aa).

Residues 53–80 (NNSGDQATEEEEGGYSCGTAESHDSKGI) are disordered. S55 is subject to Phosphoserine. Residue T60 is modified to Phosphothreonine. A phosphoserine mark is found at S85, S89, S96, and S141. Y146 is subject to Phosphotyrosine. Residues 149-187 (DDILASDDPSSIEQYENTRTYELQSKKDTETENPPVENT) are disordered. The residue at position 154 (S154) is a Phosphoserine. Positions 156–171 (DPSSIEQYENTRTYEL) are enriched in polar residues. At S189 the chain carries Phosphoserine. Disordered stretches follow at residues 334-461 (SQLD…GGIP) and 527-632 (DEEA…KKVN). The span at 367-382 (NGGTNEESNSSGNTNT) shows a compositional bias: low complexity. S412, S438, and S578 each carry phosphoserine. Over residues 431-442 (DIDENPASDFDD) the composition is skewed to acidic residues. Polar residues predominate over residues 564–578 (ETNNPEPEKCQSVSS). A compositionally biased stretch (basic and acidic residues) spans 608–619 (PDSRQAETEAEV). The segment covering 620–630 (KKKKNKKKNKK) has biased composition (basic residues). Positions 631-846 (VNGLPPEIAA…TITAYFGDLI (216 aa)) are sufficient for catalytic activity. D719 lines the S-adenosyl-L-methionine pocket. Residue W766 coordinates N(7)-methylguanosine.

This sequence belongs to the methyltransferase superfamily. Trimethylguanosine synthase family. As to quaternary structure, may form homooligomers. Interacts with CREBBP/CBP, EED/WAIT1, EP300/P300, NCOA6/PRIP, PPARBP/PBP and SMN. Ubiquitously expressed. High expression in heart, skeletal muscle, kidney, liver and placenta.

It is found in the cytoplasm. Its subcellular location is the nucleus. The protein resides in the cajal body. It localises to the nucleolus. The catalysed reaction is a 5'-end (N(7)-methyl 5'-triphosphoguanosine)-ribonucleoside in snRNA + S-adenosyl-L-methionine = a 5'-end (N(2),N(7)-dimethyl 5'-triphosphoguanosine)-ribonucleoside in snRNA + S-adenosyl-L-homocysteine + H(+). It carries out the reaction a 5'-end (N(7)-methyl 5'-triphosphoguanosine)-ribonucleoside in snoRNA + S-adenosyl-L-methionine = a 5'-end (N(2),N(7)-dimethyl 5'-triphosphoguanosine)-ribonucleoside in snoRNA + S-adenosyl-L-homocysteine + H(+). The enzyme catalyses a 5'-end (N(2),N(7)-dimethyl 5'-triphosphoguanosine)-ribonucleoside in snRNA + S-adenosyl-L-methionine = a 5'-end (N(2),N(2),N(7)-trimethyl 5'-triphosphoguanosine)-ribonucleoside in snRNA + S-adenosyl-L-homocysteine + H(+). It catalyses the reaction a 5'-end (N(2),N(7)-dimethyl 5'-triphosphoguanosine)-ribonucleoside in snoRNA + S-adenosyl-L-methionine = a 5'-end (N(2),N(2),N(7)-trimethyl 5'-triphosphoguanosine)-ribonucleoside in snoRNA + S-adenosyl-L-homocysteine + H(+). Its function is as follows. Catalyzes the 2 serial methylation steps for the conversion of the 7-monomethylguanosine (m(7)G) caps of snRNAs and snoRNAs to a 2,2,7-trimethylguanosine (m(2,2,7)G) cap structure. The enzyme is specific for guanine, and N7 methylation must precede N2 methylation. Hypermethylation of the m7G cap of U snRNAs leads to their concentration in nuclear foci, their colocalization with coilin and the formation of canonical Cajal bodies (CBs). Plays a role in transcriptional regulation. The polypeptide is Trimethylguanosine synthase (TGS1) (Homo sapiens (Human)).